The chain runs to 147 residues: D-aminoacyl-tRNA deacylase (147 aa).

The Gly-cisPro motif, important for rejection of L-amino acids signature appears at Gly-137–Pro-138.

The protein belongs to the DTD family. Homodimer.

It is found in the cytoplasm. The catalysed reaction is glycyl-tRNA(Ala) + H2O = tRNA(Ala) + glycine + H(+). It carries out the reaction a D-aminoacyl-tRNA + H2O = a tRNA + a D-alpha-amino acid + H(+). An aminoacyl-tRNA editing enzyme that deacylates mischarged D-aminoacyl-tRNAs. Also deacylates mischarged glycyl-tRNA(Ala), protecting cells against glycine mischarging by AlaRS. Acts via tRNA-based rather than protein-based catalysis; rejects L-amino acids rather than detecting D-amino acids in the active site. By recycling D-aminoacyl-tRNA to D-amino acids and free tRNA molecules, this enzyme counteracts the toxicity associated with the formation of D-aminoacyl-tRNA entities in vivo and helps enforce protein L-homochirality. The chain is D-aminoacyl-tRNA deacylase from Bacillus pumilus (strain SAFR-032).